The sequence spans 278 residues: Digeranylgeranylglyceryl phosphate synthase (278 aa).

8 helical membrane passes run 15–35, 36–56, 89–109, 133–153, 159–179, 203–223, 225–245, and 258–278; these read VIGS…WKIV, PIKL…GYII, IVLF…AFII, LIVA…FFEG, TLIP…VKGI, WFIS…PYFF, FNII…LVVL, and AYMK…TLPI.

This sequence belongs to the UbiA prenyltransferase family. DGGGP synthase subfamily. Mg(2+) is required as a cofactor.

The protein resides in the cell membrane. It carries out the reaction sn-3-O-(geranylgeranyl)glycerol 1-phosphate + (2E,6E,10E)-geranylgeranyl diphosphate = 2,3-bis-O-(geranylgeranyl)-sn-glycerol 1-phosphate + diphosphate. It participates in membrane lipid metabolism; glycerophospholipid metabolism. Its function is as follows. Prenyltransferase that catalyzes the transfer of the geranylgeranyl moiety of geranylgeranyl diphosphate (GGPP) to the C2 hydroxyl of (S)-3-O-geranylgeranylglyceryl phosphate (GGGP). This reaction is the second ether-bond-formation step in the biosynthesis of archaeal membrane lipids. In Sulfurisphaera tokodaii (strain DSM 16993 / JCM 10545 / NBRC 100140 / 7) (Sulfolobus tokodaii), this protein is Digeranylgeranylglyceryl phosphate synthase.